The following is a 166-amino-acid chain: Regulatory protein RecX (166 aa).

The protein belongs to the RecX family.

It localises to the cytoplasm. Its function is as follows. Modulates RecA activity. This Salmonella paratyphi A (strain ATCC 9150 / SARB42) protein is Regulatory protein RecX.